The following is a 907-amino-acid chain: Collagen alpha-2(I) chain (907 aa).

Disordered stretches follow at residues 1 to 183 and 199 to 907; these read GPMG…GIPG and IPGP…PGPS. Basic and acidic residues predominate over residues 19 to 33; it reads AGEDGHPGKPGRERG. Low complexity-rich tracts occupy residues 101-130, 155-169, and 206-221; these read VGAPGPAGARGSDGSVGPVGPAGPIGSAGP, AGPRGEVGIPGVSGP, and PGPVGAAGATGARGIV. At Asn260 the chain carries Deamidated asparagine. A 4-hydroxyproline modification is found at Pro272. Low complexity-rich tracts occupy residues 272–281, 292–307, 340–362, 424–441, 453–475, 495–507, 535–555, and 566–581; these read PGIRGSRGIP, PPGSRGASGPAGVRGP, PAGIPGIDGRPGPAGPAGARGEP, PGESGAAGPAGPIGSRGP, EPGVVGAPGTAGPSGPSGIPGER, APGAVGAPGPAGA, VGPAGPNGFAGPAGAAGQPGA, and NGPVGPTGPVGSAGPA. The segment covering 591–600 has biased composition (gly residues); the sequence is GSRGDGGPPG. Low complexity-rich tracts occupy residues 601–611, 664–691, 706–745, 756–766, and 783–804; these read ATGFPGAAGRT, EAGTAGAPGIPGPQGIIGAPGIIGIPGS, EPGPIGIAGPPGARGPPGAVGSPGVNGAPGEAGRDGNPGN, NSGPVGAAGAP, and EPGPVGSVGPAGAVGPRGPSGP. A compositionally biased stretch (basic and acidic residues) spans 808–819; that stretch reads RGDKGEPGDKGP. Pro residues predominate over residues 892-907; sequence AGPPGPPGPPGPPGPS.

Belongs to the fibrillar collagen family. As to quaternary structure, trimers of one alpha 2(I) and two alpha 1(I) chains. Interacts (via C-terminus) with TMEM131 (via PapD-L domain); the interaction is direct and is involved in assembly and TRAPPIII ER-to-Golgi transport complex-dependent secretion of collagen. Post-translationally, prolines at the third position of the tripeptide repeating unit (G-X-Y) are hydroxylated in some or all of the chains. As to expression, forms the fibrils of tendon, ligaments and bones. In bones, the fibrils are mineralized with calcium hydroxyapatite.

The protein localises to the secreted. Its subcellular location is the extracellular space. The protein resides in the extracellular matrix. Type I collagen is a member of group I collagen (fibrillar forming collagen). The sequence is that of Collagen alpha-2(I) chain from Macrauchenia sp.